Reading from the N-terminus, the 184-residue chain is Large ribosomal subunit protein uL5 (184 aa).

It belongs to the universal ribosomal protein uL5 family. Component of the large ribosomal subunit. Interacts with Fmr1 to form the RNA-induced silencing complex (RISC), a ribonucleoprotein (RNP) complex involved in translation regulation, other components of the complex are RpL5, Rm62, AGO2 and Dcr-1.

The protein localises to the nucleus. It localises to the cytoplasm. Its function is as follows. Component of the ribosome, a large ribonucleoprotein complex responsible for the synthesis of proteins in the cell. The small ribosomal subunit (SSU) binds messenger RNAs (mRNAs) and translates the encoded message by selecting cognate aminoacyl-transfer RNA (tRNA) molecules. The large subunit (LSU) contains the ribosomal catalytic site termed the peptidyl transferase center (PTC), which catalyzes the formation of peptide bonds, thereby polymerizing the amino acids delivered by tRNAs into a polypeptide chain. The nascent polypeptides leave the ribosome through a tunnel in the LSU and interact with protein factors that function in enzymatic processing, targeting, and the membrane insertion of nascent chains at the exit of the ribosomal tunnel. The polypeptide is Large ribosomal subunit protein uL5 (RpL11) (Drosophila melanogaster (Fruit fly)).